Here is a 153-residue protein sequence, read N- to C-terminus: uncharacterized protein (153 aa).

The next 2 helical transmembrane spans lie at 16–36 (ILACLLLIFLMATIFLLILEI) and 97–117 (ALTTTLSIILLVCIIMACIIC).

It localises to the membrane. This is an uncharacterized protein from Human herpesvirus 6A (strain Uganda-1102) (HHV-6 variant A).